A 155-amino-acid chain; its full sequence is Small ribosomal subunit protein uS7c (155 aa).

Belongs to the universal ribosomal protein uS7 family. In terms of assembly, part of the 30S ribosomal subunit.

It localises to the plastid. It is found in the chloroplast. In terms of biological role, one of the primary rRNA binding proteins, it binds directly to 16S rRNA where it nucleates assembly of the head domain of the 30S subunit. This is Small ribosomal subunit protein uS7c (rps7) from Metasequoia glyptostroboides (Dawn redwood).